We begin with the raw amino-acid sequence, 361 residues long: Septin-2 (361 aa).

Tyr-17 carries the phosphotyrosine modification. One can recognise a Septin-type G domain in the interval 34-306; sequence KGFEFTLMVV…ENFRSERLKR (273 aa). The interval 44–51 is G1 motif; the sequence is GESGLGKS. GTP contacts are provided by residues 44–51, Thr-78, Gly-104, and 183–191; these read GESGLGKS and KADTLTLKE. A G3 motif region spans residues 101 to 104; that stretch reads DTPG. Residues 182–185 form a G4 motif region; it reads AKAD. Position 190 is an N6-acetyllysine (Lys-190). Tyr-211 is modified (phosphotyrosine). Position 218 is a phosphoserine (Ser-218). Gly-241 and Arg-256 together coordinate GTP. The tract at residues 260–270 is important for dimerization; sequence WGVVEVENPEH.

It belongs to the TRAFAC class TrmE-Era-EngA-EngB-Septin-like GTPase superfamily. Septin GTPase family. As to quaternary structure, septins polymerize into heterooligomeric protein complexes that form filaments, and associate with cellular membranes, actin filaments and microtubules. GTPase activity is required for filament formation. Filaments are assembled from asymmetrical heterotrimers, composed of SEPTIN2, SEPTIN6 and SEPTIN7 that associate head-to-head to form a hexameric unit. Interaction between SEPTIN2 and SEPTIN7 seems indirect. Interacts with SEPTIN5. Interaction with SEPTIN4 not detected. Interacts with SEPTIN9. Component of a septin core octameric complex consisting of SEPTIN12, SEPTIN7, SEPTIN6 and SEPTIN2 or SEPTIN4 in the order 12-7-6-2-2-6-7-12 or 12-7-6-4-4-6-7-12 and located in the sperm annulus. Interacts with MAP4. Interacts with DZIP1L.

The protein localises to the cytoplasm. It is found in the cytoskeleton. Its subcellular location is the spindle. It localises to the chromosome. The protein resides in the centromere. The protein localises to the kinetochore. It is found in the cleavage furrow. Its subcellular location is the midbody. It localises to the cell cortex. The protein resides in the cell projection. The protein localises to the cilium membrane. It is found in the cilium. Its subcellular location is the flagellum. Filament-forming cytoskeletal GTPase. Forms a filamentous structure with SEPTIN12, SEPTIN6, SEPTIN2 and probably SEPTIN4 at the sperm annulus which is required for the structural integrity and motility of the sperm tail during postmeiotic differentiation. Required for normal organization of the actin cytoskeleton. Plays a role in the biogenesis of polarized columnar-shaped epithelium by maintaining polyglutamylated microtubules, thus facilitating efficient vesicle transport, and by impeding MAP4 binding to tubulin. Required for the progression through mitosis. Forms a scaffold at the midplane of the mitotic splindle required to maintain CENPE localization at kinetochores and consequently chromosome congression. During anaphase, may be required for chromosome segregation and spindle elongation. Plays a role in ciliogenesis and collective cell movements. In cilia, required for the integrity of the diffusion barrier at the base of the primary cilium that prevents diffusion of transmembrane proteins between the cilia and plasma membranes: probably acts by regulating the assembly of the tectonic-like complex (also named B9 complex) by localizing TMEM231 protein. This chain is Septin-2, found in Bos taurus (Bovine).